A 579-amino-acid polypeptide reads, in one-letter code: Laccase-4 (579 aa).

Positions methionine 1–glycine 28 are cleaved as a signal peptide. 2 consecutive Plastocyanin-like domains span residues asparagine 36–glycine 152 and lysine 162–proline 316. Residues asparagine 41 and asparagine 82 are each glycosylated (N-linked (GlcNAc...) asparagine). Histidine 86 and histidine 88 together coordinate Cu cation. Asparagine 118 is a glycosylation site (N-linked (GlcNAc...) asparagine). Residues histidine 131 and histidine 133 each contribute to the Cu cation site. N-linked (GlcNAc...) asparagine glycosylation is found at asparagine 191, asparagine 207, asparagine 243, asparagine 304, asparagine 340, asparagine 347, asparagine 386, asparagine 393, asparagine 403, asparagine 439, asparagine 446, and asparagine 462. The 135-residue stretch at aspartate 429–serine 563 folds into the Plastocyanin-like 3 domain. Residues histidine 480, histidine 483, histidine 485, histidine 542, cysteine 543, histidine 544, and histidine 548 each contribute to the Cu cation site.

The protein belongs to the multicopper oxidase family. Cu cation serves as cofactor.

It localises to the secreted. The protein localises to the extracellular space. The protein resides in the apoplast. It catalyses the reaction 4 hydroquinone + O2 = 4 benzosemiquinone + 2 H2O. In terms of biological role, lignin degradation and detoxification of lignin-derived products. The protein is Laccase-4 (LAC4) of Oryza sativa subsp. japonica (Rice).